A 336-amino-acid chain; its full sequence is Tetraacyldisaccharide 4'-kinase (336 aa).

Residue 60–67 coordinates ATP; the sequence is TVGGTGKT.

This sequence belongs to the LpxK family.

The catalysed reaction is a lipid A disaccharide + ATP = a lipid IVA + ADP + H(+). The protein operates within glycolipid biosynthesis; lipid IV(A) biosynthesis; lipid IV(A) from (3R)-3-hydroxytetradecanoyl-[acyl-carrier-protein] and UDP-N-acetyl-alpha-D-glucosamine: step 6/6. In terms of biological role, transfers the gamma-phosphate of ATP to the 4'-position of a tetraacyldisaccharide 1-phosphate intermediate (termed DS-1-P) to form tetraacyldisaccharide 1,4'-bis-phosphate (lipid IVA). The polypeptide is Tetraacyldisaccharide 4'-kinase (Pseudomonas entomophila (strain L48)).